The sequence spans 427 residues: Gamma-glutamyl phosphate reductase (427 aa).

This sequence belongs to the gamma-glutamyl phosphate reductase family.

The protein resides in the cytoplasm. It carries out the reaction L-glutamate 5-semialdehyde + phosphate + NADP(+) = L-glutamyl 5-phosphate + NADPH + H(+). Its pathway is amino-acid biosynthesis; L-proline biosynthesis; L-glutamate 5-semialdehyde from L-glutamate: step 2/2. Its function is as follows. Catalyzes the NADPH-dependent reduction of L-glutamate 5-phosphate into L-glutamate 5-semialdehyde and phosphate. The product spontaneously undergoes cyclization to form 1-pyrroline-5-carboxylate. The polypeptide is Gamma-glutamyl phosphate reductase (Rhodospirillum rubrum (strain ATCC 11170 / ATH 1.1.1 / DSM 467 / LMG 4362 / NCIMB 8255 / S1)).